The chain runs to 432 residues: tRNA(Ile)-lysidine synthase (432 aa).

Position 19-24 (19-24 (STGIDS)) interacts with ATP.

This sequence belongs to the tRNA(Ile)-lysidine synthase family.

Its subcellular location is the cytoplasm. The enzyme catalyses cytidine(34) in tRNA(Ile2) + L-lysine + ATP = lysidine(34) in tRNA(Ile2) + AMP + diphosphate + H(+). Ligates lysine onto the cytidine present at position 34 of the AUA codon-specific tRNA(Ile) that contains the anticodon CAU, in an ATP-dependent manner. Cytidine is converted to lysidine, thus changing the amino acid specificity of the tRNA from methionine to isoleucine. The chain is tRNA(Ile)-lysidine synthase from Staphylococcus epidermidis (strain ATCC 35984 / DSM 28319 / BCRC 17069 / CCUG 31568 / BM 3577 / RP62A).